A 231-amino-acid polypeptide reads, in one-letter code: Ribose-5-phosphate isomerase A (231 aa).

Residues 28-31 (TGST), 83-86 (DGAD), and 96-99 (KGGG) each bind substrate. The Proton acceptor role is filled by Glu-105. A substrate-binding site is contributed by Lys-123.

Belongs to the ribose 5-phosphate isomerase family. In terms of assembly, homodimer.

The enzyme catalyses aldehydo-D-ribose 5-phosphate = D-ribulose 5-phosphate. It participates in carbohydrate degradation; pentose phosphate pathway; D-ribose 5-phosphate from D-ribulose 5-phosphate (non-oxidative stage): step 1/1. In terms of biological role, catalyzes the reversible conversion of ribose-5-phosphate to ribulose 5-phosphate. The chain is Ribose-5-phosphate isomerase A from Rhizobium meliloti (strain 1021) (Ensifer meliloti).